Here is a 182-residue protein sequence, read N- to C-terminus: Ribulose bisphosphate carboxylase small subunit, chloroplastic 6 (182 aa).

A chloroplast-targeting transit peptide spans 1–41 (MAATMMSKTIISSKQCSKPIAPPKVSINKGFVNTSAAIKNR).

This sequence belongs to the RuBisCO small chain family. In terms of assembly, heterohexadecamer of 8 large and 8 small subunits.

Its subcellular location is the plastid. It is found in the chloroplast. In terms of biological role, ruBisCO catalyzes two reactions: the carboxylation of D-ribulose 1,5-bisphosphate, the primary event in carbon dioxide fixation, as well as the oxidative fragmentation of the pentose substrate. Both reactions occur simultaneously and in competition at the same active site. Although the small subunit is not catalytic it is essential for maximal activity. The protein is Ribulose bisphosphate carboxylase small subunit, chloroplastic 6 of Acetabularia peniculus (Green alga).